Consider the following 315-residue polypeptide: Tetraacyldisaccharide 4'-kinase (315 aa).

52-59 (TVGGTGKT) contacts ATP.

Belongs to the LpxK family.

It carries out the reaction a lipid A disaccharide + ATP = a lipid IVA + ADP + H(+). The protein operates within glycolipid biosynthesis; lipid IV(A) biosynthesis; lipid IV(A) from (3R)-3-hydroxytetradecanoyl-[acyl-carrier-protein] and UDP-N-acetyl-alpha-D-glucosamine: step 6/6. Functionally, transfers the gamma-phosphate of ATP to the 4'-position of a tetraacyldisaccharide 1-phosphate intermediate (termed DS-1-P) to form tetraacyldisaccharide 1,4'-bis-phosphate (lipid IVA). The polypeptide is Tetraacyldisaccharide 4'-kinase (Ruthia magnifica subsp. Calyptogena magnifica).